Consider the following 225-residue polypeptide: N-(5'-phosphoribosyl)anthranilate isomerase (225 aa).

The protein belongs to the TrpF family.

It carries out the reaction N-(5-phospho-beta-D-ribosyl)anthranilate = 1-(2-carboxyphenylamino)-1-deoxy-D-ribulose 5-phosphate. It functions in the pathway amino-acid biosynthesis; L-tryptophan biosynthesis; L-tryptophan from chorismate: step 3/5. This is N-(5'-phosphoribosyl)anthranilate isomerase from Nitrobacter winogradskyi (strain ATCC 25391 / DSM 10237 / CIP 104748 / NCIMB 11846 / Nb-255).